Here is a 309-residue protein sequence, read N- to C-terminus: Zinc-finger homeodomain protein 5 (309 aa).

Over residues 1–16 (MDMRSHEMIERRREDN) the composition is skewed to basic and acidic residues. The tract at residues 1 to 21 (MDMRSHEMIERRREDNGNNNG) is disordered. A ZF-HD dimerization-type; degenerate zinc finger spans residues 76–125 (YRECLKNHAASVGGSVHDGCGEFMPSGEEGTIEALRCAACDCHRNFHRKE). The segment at residues 240–303 (KKRFRTKFTT…NNKNNAKKPP (64 aa)) is a DNA-binding region (homeobox).

As to quaternary structure, homo- and heterodimer with other ZFHD proteins. Interacts with MIF1, MIF2 and MIF3; these interactions prevent nuclear localization and DNA-binding to inhibit transcription regulation activity. Binds to ZHD1, ZHD2, ZHD4, ZHD10 and ZHD11. As to expression, mostly expressed in flowers and inflorescence.

It localises to the nucleus. In terms of biological role, putative transcription factor. Binds DNA at 5'-ATTA-3' consensus promoter regions. Regulates floral architecture and leaf development. Regulators in the abscisic acid (ABA) signal pathway that confers sensitivity to ABA in an ARF2-dependent manner. This is Zinc-finger homeodomain protein 5 (ZHD5) from Arabidopsis thaliana (Mouse-ear cress).